We begin with the raw amino-acid sequence, 347 residues long: Phosphate acyltransferase (347 aa).

It belongs to the PlsX family. As to quaternary structure, homodimer. Probably interacts with PlsY.

The protein localises to the cytoplasm. The catalysed reaction is a fatty acyl-[ACP] + phosphate = an acyl phosphate + holo-[ACP]. It participates in lipid metabolism; phospholipid metabolism. In terms of biological role, catalyzes the reversible formation of acyl-phosphate (acyl-PO(4)) from acyl-[acyl-carrier-protein] (acyl-ACP). This enzyme utilizes acyl-ACP as fatty acyl donor, but not acyl-CoA. This is Phosphate acyltransferase from Dehalococcoides mccartyi (strain ATCC BAA-2100 / JCM 16839 / KCTC 5957 / BAV1).